A 363-amino-acid chain; its full sequence is Peptide chain release factor 1 (363 aa).

Gln237 carries the N5-methylglutamine modification. A compositionally biased stretch (basic and acidic residues) spans 284–296; sequence EDEKRRSAEESTR. Residues 284 to 306 are disordered; that stretch reads EDEKRRSAEESTRRSLVASGDRS.

It belongs to the prokaryotic/mitochondrial release factor family. Methylated by PrmC. Methylation increases the termination efficiency of RF1.

It is found in the cytoplasm. Its function is as follows. Peptide chain release factor 1 directs the termination of translation in response to the peptide chain termination codons UAG and UAA. This is Peptide chain release factor 1 from Shewanella putrefaciens (strain CN-32 / ATCC BAA-453).